Consider the following 51-residue polypeptide: Sperm protamine P1 (51 aa).

Belongs to the protamine P1 family. Testis.

It localises to the nucleus. The protein localises to the chromosome. In terms of biological role, protamines substitute for histones in the chromatin of sperm during the haploid phase of spermatogenesis. They compact sperm DNA into a highly condensed, stable and inactive complex. This chain is Sperm protamine P1 (PRM1), found in Nasalis larvatus (Proboscis monkey).